Reading from the N-terminus, the 41-residue chain is Large ribosomal subunit protein bL36 (41 aa).

The protein belongs to the bacterial ribosomal protein bL36 family.

This chain is Large ribosomal subunit protein bL36, found in Chelativorans sp. (strain BNC1).